Reading from the N-terminus, the 220-residue chain is MEHEFWLQSWHEGRTGFHQLRVQPLLQKYWPTLDLPTGSKIFVPLTGKSLDMAWLAAQGYRVLGVELSLLAVQQFFAEHGLKPAVRESHYGTHYTARNIEVICGDTFALDAALLSDCSGIYDRAALIALPPELRVPYINELMTCLPAGCSGLLITLEYQQQEMVGPPFSVEEAEVLKCYSPRWCVKLLERNDILPQEPGFAARGLTKLATAVYQLQRLAV.

Trp10, Leu45, Glu66, and Arg123 together coordinate S-adenosyl-L-methionine.

The protein belongs to the class I-like SAM-binding methyltransferase superfamily. TPMT family.

It localises to the cytoplasm. It carries out the reaction S-adenosyl-L-methionine + a thiopurine = S-adenosyl-L-homocysteine + a thiopurine S-methylether.. This Nitrosomonas eutropha (strain DSM 101675 / C91 / Nm57) protein is Thiopurine S-methyltransferase.